Reading from the N-terminus, the 180-residue chain is Ribulose bisphosphate carboxylase small subunit, chloroplastic (180 aa).

The N-terminal 56 residues, methionine 1–arginine 56, are a transit peptide targeting the chloroplast.

It belongs to the RuBisCO small chain family. In terms of assembly, heterohexadecamer of 8 large and 8 small subunits.

The protein resides in the plastid. It localises to the chloroplast. RuBisCO catalyzes two reactions: the carboxylation of D-ribulose 1,5-bisphosphate, the primary event in carbon dioxide fixation, as well as the oxidative fragmentation of the pentose substrate. Both reactions occur simultaneously and in competition at the same active site. Although the small subunit is not catalytic it is essential for maximal activity. This is Ribulose bisphosphate carboxylase small subunit, chloroplastic from Stellaria longipes (Longstalk starwort).